Consider the following 154-residue polypeptide: N-acetylneuraminate anomerase NanQ (154 aa).

It belongs to the NanQ anomerase family. Zn(2+) serves as cofactor.

It localises to the cytoplasm. The enzyme catalyses N-acetyl-alpha-neuraminate = aceneuramate. The catalysed reaction is N-acetyl-beta-neuraminate = aceneuramate. Its activity is regulated as follows. Inhibited by 1,10-phenanthroline. Functionally, opens both the alpha- and beta-forms of N-acetylneuraminate (sialic acid; Neu5Ac) to provide aceneuramate, the preferred substrate for NanA. Has preferential activity on the beta-anomer rather than the alpha-anomer. Accelerates a reaction that is spontaneous at slightly alkaline pH, facilitates the reaction at acidic pH. The chain is N-acetylneuraminate anomerase NanQ from Escherichia coli (strain K12).